Here is a 314-residue protein sequence, read N- to C-terminus: (+)-neomenthol dehydrogenase (314 aa).

13–36 (VTGGNKGIGYETCRQLASKGVVVV) contacts NADP(+). Position 183 (Ser183) interacts with substrate. Tyr239 acts as the Proton acceptor in catalysis.

Belongs to the short-chain dehydrogenases/reductases (SDR) family. In terms of assembly, monomer. In terms of tissue distribution, expressed in flowers and red fruit tissues. Not detected in leaves, stems, roots or green fruits.

It carries out the reaction (+)-neomenthol + NADP(+) = (1R,4S)-menthone + NADPH + H(+). Its function is as follows. Involved in basal resistance against pathogens. The chain is (+)-neomenthol dehydrogenase (MNR1) from Capsicum annuum (Capsicum pepper).